The sequence spans 169 residues: Myosin regulatory light chain 11 (169 aa).

Residue Ala2 is modified to N,N,N-trimethylalanine. Phosphoserine occurs at positions 15 and 16. Phosphothreonine is present on residues Thr25 and Thr35. The region spanning 25–60 (TQIQEFKEAFTVIDQNRDGIIDKEDLRDTFAAMGRL) is the EF-hand 1 domain. Residues Asp38, Asn40, Asp42, and Asp49 each coordinate Ca(2+). A Phosphoserine modification is found at Ser75. 2 consecutive EF-hand domains span residues 95 to 130 (DPED…QCDR) and 131 to 166 (FSQE…GDAK). Thr101 is modified (phosphothreonine).

As to quaternary structure, myosin is a hexamer of 2 heavy chains and 4 light chains.

Myosin regulatory subunit that plays an essential role to maintain muscle integrity during early development. Plays a role in regulation of muscle contraction. This Mus musculus (Mouse) protein is Myosin regulatory light chain 11 (Myl11).